A 115-amino-acid polypeptide reads, in one-letter code: MAFPTSSAQQAETNRKILEEIQTKKQLLIGLGSTTNQMPAPQLLGQPTVTAEFTQGVSVAPNAAGGIAAPRSAFNPTSSTTLGFFIPQDSYFGNSFIPVLPRLEPVPTSSAPNVK.

Belongs to the SOSS-C family.

The chain is SOSS complex subunit C homolog from Drosophila grimshawi (Hawaiian fruit fly).